A 297-amino-acid chain; its full sequence is Bax inhibitor 1 (297 aa).

The Lumenal portion of the chain corresponds to 1–53 (MSGPPPPYEEQSSHLYGQPASSQDGNAFIPEDFKYSTVVISCEPIIRQRFMHK). Residues 54 to 74 (VYSLLSCQLLASLSFCYWASV) form a helical membrane-spanning segment. Residues 75 to 85 (STSLQNFIMSH) lie on the Cytoplasmic side of the membrane. Residues 86-106 (IALFYICMVVSLVSCIWLAVS) traverse the membrane as a helical segment. Residues 107-146 (PRPEDYEASVPEPLLTGSSEEPAQEQRRLPWYVLSSYKQK) are Lumenal-facing. The helical transmembrane segment at 147-167 (LTLLSIFTLSEAYCLSLVTLA) threads the bilayer. The Cytoplasmic portion of the chain corresponds to 168-171 (YDKD). A helical membrane pass occupies residues 172–192 (TVLSALLITTIVVVGVSLTAL). Over 193–208 (SERFENVLNSATSIYY) the chain is Lumenal. A helical membrane pass occupies residues 209–229 (WLNWGLWIMIGMGLTALLFGW). Topologically, residues 230-239 (NTHSSKFNLL) are cytoplasmic. Residues 240–260 (YGWLGAILFTAYLFIDTQLIF) traverse the membrane as a helical segment. The Lumenal portion of the chain corresponds to 261-270 (RKVYPDEEVR). The chain crosses the membrane as a helical span at residues 271–291 (CAMMLYLDIVNLFLSILRILA). Over 292-297 (NSNDDN) the chain is Cytoplasmic.

The protein belongs to the BI1 family. LFG subfamily.

The protein resides in the endoplasmic reticulum membrane. It is found in the vacuole membrane. It localises to the mitochondrion membrane. Its function is as follows. Links the unfolded protein response and programmed cell death and mediates mitochondrial-dependent apoptosis. Induces cell death and disruption of the mitochondrial transmembrane potential via the mitochondrial phosphate carrier MIR1. Dispensible for starvation-induced autophagy. In Saccharomyces cerevisiae (strain ATCC 204508 / S288c) (Baker's yeast), this protein is Bax inhibitor 1 (BXI1).